A 568-amino-acid polypeptide reads, in one-letter code: Urease subunit alpha (568 aa).

The 440-residue stretch at 129–568 folds into the Urease domain; the sequence is GAIDSHIHFI…LPMAQRYFLF (440 aa). Ni(2+) is bound by residues histidine 134, histidine 136, and lysine 217. Lysine 217 is modified (N6-carboxylysine). A substrate-binding site is contributed by histidine 219. Ni(2+)-binding residues include histidine 246 and histidine 272. The active-site Proton donor is histidine 320. Position 360 (aspartate 360) interacts with Ni(2+).

It belongs to the metallo-dependent hydrolases superfamily. Urease alpha subunit family. Heterotrimer of UreA (gamma), UreB (beta) and UreC (alpha) subunits. Three heterotrimers associate to form the active enzyme. It depends on Ni cation as a cofactor. In terms of processing, carboxylation allows a single lysine to coordinate two nickel ions.

It localises to the cytoplasm. It catalyses the reaction urea + 2 H2O + H(+) = hydrogencarbonate + 2 NH4(+). The protein operates within nitrogen metabolism; urea degradation; CO(2) and NH(3) from urea (urease route): step 1/1. This chain is Urease subunit alpha, found in Saccharophagus degradans (strain 2-40 / ATCC 43961 / DSM 17024).